Here is a 342-residue protein sequence, read N- to C-terminus: MSARPGLLARAEARLTREWQRRGALAWALAPFACAFGAIAALRRAAYARGWKARVDCGVPVVVVGNVTVGGTGKTPTVIALVDALRAAGFTPGVVSRGYGAKIAAPTAVTAASPPQQAGDEPLLIARRTLAPVWVCPDRVAAVRALKAAHPEVDVVVSDDGLQHYRLARAVEIVVFDHRLGGNGFLLPAGPLREPLSRRRDATLVNDPYSRALPPWPDTFALSLAPGDAWHLDRPSRRKPLAQFAGERVLAAAGIGAPERFFATLRAAGVAPATRALPDHYAFATNPFVDDHFDAILITEKDAVKLGTSWRDARIWVVPVEAALDPRLIALVVEKLRGRTSA.

68 to 75 (TVGGTGKT) lines the ATP pocket.

Belongs to the LpxK family.

The enzyme catalyses a lipid A disaccharide + ATP = a lipid IVA + ADP + H(+). It functions in the pathway glycolipid biosynthesis; lipid IV(A) biosynthesis; lipid IV(A) from (3R)-3-hydroxytetradecanoyl-[acyl-carrier-protein] and UDP-N-acetyl-alpha-D-glucosamine: step 6/6. Functionally, transfers the gamma-phosphate of ATP to the 4'-position of a tetraacyldisaccharide 1-phosphate intermediate (termed DS-1-P) to form tetraacyldisaccharide 1,4'-bis-phosphate (lipid IVA). This chain is Tetraacyldisaccharide 4'-kinase, found in Burkholderia pseudomallei (strain K96243).